A 189-amino-acid chain; its full sequence is NADH-ubiquinone oxidoreductase 20.9 kDa subunit (189 aa).

Residues 73–88 traverse the membrane as a helical segment; sequence AMRLATAVGFFGGFLY.

As to quaternary structure, complex I is composed of about 40 different subunits. In terms of processing, the N-terminus is blocked.

The protein localises to the mitochondrion inner membrane. The enzyme catalyses a ubiquinone + NADH + 5 H(+)(in) = a ubiquinol + NAD(+) + 4 H(+)(out). Functionally, transfer of electrons from NADH to the respiratory chain. The immediate electron acceptor for the enzyme is believed to be ubiquinone. The chain is NADH-ubiquinone oxidoreductase 20.9 kDa subunit (nuo20.9) from Neurospora crassa (strain ATCC 24698 / 74-OR23-1A / CBS 708.71 / DSM 1257 / FGSC 987).